A 957-amino-acid chain; its full sequence is Glycine dehydrogenase (decarboxylating) (957 aa).

Lysine 708 carries the N6-(pyridoxal phosphate)lysine modification.

This sequence belongs to the GcvP family. In terms of assembly, the glycine cleavage system is composed of four proteins: P, T, L and H. Pyridoxal 5'-phosphate is required as a cofactor.

The enzyme catalyses N(6)-[(R)-lipoyl]-L-lysyl-[glycine-cleavage complex H protein] + glycine + H(+) = N(6)-[(R)-S(8)-aminomethyldihydrolipoyl]-L-lysyl-[glycine-cleavage complex H protein] + CO2. Functionally, the glycine cleavage system catalyzes the degradation of glycine. The P protein binds the alpha-amino group of glycine through its pyridoxal phosphate cofactor; CO(2) is released and the remaining methylamine moiety is then transferred to the lipoamide cofactor of the H protein. The protein is Glycine dehydrogenase (decarboxylating) of Escherichia coli O81 (strain ED1a).